Here is a 430-residue protein sequence, read N- to C-terminus: Probable transporter SCO4007 (430 aa).

The segment covering Met-1 to Ala-17 has biased composition (low complexity). The interval Met-1 to Gly-26 is disordered. Helical transmembrane passes span Leu-34–Ala-54, Ala-70–Ala-90, Leu-101–Gly-121, Ala-126–Val-146, Val-159–Leu-179, Ala-188–Leu-208, Ala-244–Gly-264, Gly-275–Val-295, Val-315–Val-335, Thr-362–Ala-382, and Phe-383–Trp-403.

The protein belongs to the major facilitator superfamily.

It localises to the cell membrane. The chain is Probable transporter SCO4007 from Streptomyces coelicolor (strain ATCC BAA-471 / A3(2) / M145).